The following is a 185-amino-acid chain: Inner membrane-spanning protein YciB (185 aa).

Transmembrane regions (helical) follow at residues 19-39 (LGGV…QIVI), 53-73 (IMAS…EIRY), 76-96 (WKVT…QFQF), 118-138 (TLNF…IYIS), and 149-169 (FKSF…GVYI).

The protein belongs to the YciB family.

The protein resides in the cell inner membrane. In terms of biological role, plays a role in cell envelope biogenesis, maintenance of cell envelope integrity and membrane homeostasis. This chain is Inner membrane-spanning protein YciB, found in Haemophilus influenzae (strain PittEE).